A 331-amino-acid chain; its full sequence is MEKEIKNILMEIEKKFGKESIMLLGSKQDLNVEIFSTGSLAIDHALGINGFPKGRIIEIYGPESSGKTTIALHAIAEIQKSGGVAAFIDAEHSIDPNYAKNLGVNIDNLILSQPDSGEQALEIVDILAKSSSIDLIVVDSVAALVPEVELNGEMKDQVMGAQARLMSKALRKITGSLNKSKTTVIFINQIREKIGTFFGNPETTPGGRALKFYSSIRLDVRKVSSVSTGEVISGNNIKIKVVKNKLSAPFKEAFTEIVFSKGISKISEAVEFAENLKIITRKGAWFYYNDQNIAQGKSNLKDLLEKNEALYSEILTKVISALSKENVNSIL.

Residue 61–68 (GPESSGKT) coordinates ATP.

Belongs to the RecA family.

Its subcellular location is the cytoplasm. Can catalyze the hydrolysis of ATP in the presence of single-stranded DNA, the ATP-dependent uptake of single-stranded DNA by duplex DNA, and the ATP-dependent hybridization of homologous single-stranded DNAs. It interacts with LexA causing its activation and leading to its autocatalytic cleavage. This chain is Protein RecA, found in Mycoplasma mobile (strain ATCC 43663 / 163K / NCTC 11711) (Mesomycoplasma mobile).